A 367-amino-acid chain; its full sequence is MTVMKFDLIKKEGKARRGKITFPRGDIQTPAFMPVGTYGAVKSLSPVELKEMGAEIILGNTFHLWLRPGTEIIKKHGSLHGFNGWDKPILTDSGGFQVFSLGKMRKLTEEGVTFKSPINSSKVFLSPEISMQVQRDLGSDIVMCFDECTPYPATEKEAKESMELSMRWAKRSKEAHGDNPSALFGIIQGGMYEHLRDESLAKLKEIDFDGFAIGGLSVGEPKEDMIRILDHTAHQMPEDKPRYLMGVGTPKDLVEAVYRGVDMFDCVMPSRNARNGHIFTSEGVIKIRNSKYKDDTSPLDPNCDCYTCKNFTKSYLHHLDKTKEILGSRLNTIHNLTFYQNLMKSIRKALDEGRFSEFRKEFLASYK.

D92 (proton acceptor) is an active-site residue. Substrate is bound by residues 92 to 96 (DSGGF), D146, Q188, and G215. An RNA binding region spans residues 246–252 (GVGTPKD). D265 functions as the Nucleophile in the catalytic mechanism. C303, C305, C308, and H334 together coordinate Zn(2+).

It belongs to the queuine tRNA-ribosyltransferase family. Homodimer. Within each dimer, one monomer is responsible for RNA recognition and catalysis, while the other monomer binds to the replacement base PreQ1. It depends on Zn(2+) as a cofactor.

The catalysed reaction is 7-aminomethyl-7-carbaguanine + guanosine(34) in tRNA = 7-aminomethyl-7-carbaguanosine(34) in tRNA + guanine. Its pathway is tRNA modification; tRNA-queuosine biosynthesis. Catalyzes the base-exchange of a guanine (G) residue with the queuine precursor 7-aminomethyl-7-deazaguanine (PreQ1) at position 34 (anticodon wobble position) in tRNAs with GU(N) anticodons (tRNA-Asp, -Asn, -His and -Tyr). Catalysis occurs through a double-displacement mechanism. The nucleophile active site attacks the C1' of nucleotide 34 to detach the guanine base from the RNA, forming a covalent enzyme-RNA intermediate. The proton acceptor active site deprotonates the incoming PreQ1, allowing a nucleophilic attack on the C1' of the ribose to form the product. After dissociation, two additional enzymatic reactions on the tRNA convert PreQ1 to queuine (Q), resulting in the hypermodified nucleoside queuosine (7-(((4,5-cis-dihydroxy-2-cyclopenten-1-yl)amino)methyl)-7-deazaguanosine). This is Queuine tRNA-ribosyltransferase from Francisella tularensis subsp. tularensis (strain FSC 198).